A 373-amino-acid chain; its full sequence is Dual-specificity RNA methyltransferase RlmN (373 aa).

Glu-94 functions as the Proton acceptor in the catalytic mechanism. In terms of domain architecture, Radical SAM core spans 100-339; it reads EDDRATLCVS…VIVRKTRGDD (240 aa). Cysteines 107 and 344 form a disulfide. Residues Cys-114, Cys-118, and Cys-121 each coordinate [4Fe-4S] cluster. S-adenosyl-L-methionine contacts are provided by residues 168-169, Ser-200, 222-224, and Asn-301; these read GE and SIH. Cys-344 (S-methylcysteine intermediate) is an active-site residue.

The protein belongs to the radical SAM superfamily. RlmN family. It depends on [4Fe-4S] cluster as a cofactor.

The protein localises to the cytoplasm. The enzyme catalyses adenosine(2503) in 23S rRNA + 2 reduced [2Fe-2S]-[ferredoxin] + 2 S-adenosyl-L-methionine = 2-methyladenosine(2503) in 23S rRNA + 5'-deoxyadenosine + L-methionine + 2 oxidized [2Fe-2S]-[ferredoxin] + S-adenosyl-L-homocysteine. It carries out the reaction adenosine(37) in tRNA + 2 reduced [2Fe-2S]-[ferredoxin] + 2 S-adenosyl-L-methionine = 2-methyladenosine(37) in tRNA + 5'-deoxyadenosine + L-methionine + 2 oxidized [2Fe-2S]-[ferredoxin] + S-adenosyl-L-homocysteine. Its function is as follows. Specifically methylates position 2 of adenine 2503 in 23S rRNA and position 2 of adenine 37 in tRNAs. m2A2503 modification seems to play a crucial role in the proofreading step occurring at the peptidyl transferase center and thus would serve to optimize ribosomal fidelity. In Shewanella putrefaciens (strain CN-32 / ATCC BAA-453), this protein is Dual-specificity RNA methyltransferase RlmN.